Here is a 356-residue protein sequence, read N- to C-terminus: GTPase Obg (356 aa).

Residues 1-159 form the Obg domain; that stretch reads MKFLDEAKVY…RWIWLRMKLI (159 aa). In terms of domain architecture, OBG-type G spans 160 to 327; the sequence is ADAGLVGLPN…ALRKLADVIS (168 aa). GTP contacts are provided by residues 166–173, 191–195, 212–215, 279–282, and 308–310; these read GLPNAGKS, FTTLH, DIPG, NKID, and SGA. Mg(2+)-binding residues include serine 173 and threonine 193. Positions 332-356 are disordered; sequence SIKAKSTSDSAATEEPWAAPLPPQG.

Belongs to the TRAFAC class OBG-HflX-like GTPase superfamily. OBG GTPase family. Monomer. Mg(2+) is required as a cofactor.

It localises to the cytoplasm. In terms of biological role, an essential GTPase which binds GTP, GDP and possibly (p)ppGpp with moderate affinity, with high nucleotide exchange rates and a fairly low GTP hydrolysis rate. Plays a role in control of the cell cycle, stress response, ribosome biogenesis and in those bacteria that undergo differentiation, in morphogenesis control. The protein is GTPase Obg of Bradyrhizobium sp. (strain BTAi1 / ATCC BAA-1182).